The following is a 471-amino-acid chain: MERLLVWIEHISDWLWGPPLIILLTGTGLYFTILLKGFQFRYPLYIFKQTIGSVGKKPKGEGTVTPLQALTSALSSTIGAANIVGVPAAIMFGGPGAVFWMWLIALFAMAIKFSESVLAVHYREKNEQGEYVGGPMYYITKGLRMKWLGVFFSVALIVELIPSIMVQGNSVSVSLAETFSFNKIYAGIGIAFLIGLVVIGGVKRIGKVTEFVVPLMAGAYAGAGLLIVLMNLSSVPAFFSLVFSNAFTSSSAVGGFAGAALAETVRWGFARGLYSNEAGMGTAPIAHAAAMTDHPVRQGFWSVIGIVIDTLIICTTTAFIVLASGVWTGKNASNDPAALTTAAFQHYFGSGGGYFVSVSLVFFVVSTIMVVIFYGVKQAEFLFGRLAGHVIKFVYLAAIIIGAAGGAKAIWGVLDLALVFIVVPNVIALLLLSRKVKALYTEFFTSEQYYLKDIRKTKQKPVYPTKEAKNS.

The next 11 helical transmembrane spans lie at 15–35 (LWGPPLIILLTGTGLYFTILL), 66–86 (PLQALTSALSSTIGAANIVGV), 89–109 (AIMFGGPGAVFWMWLIALFAM), 147–167 (WLGVFFSVALIVELIPSIMVQ), 179–199 (FSFNKIYAGIGIAFLIGLVVI), 210–230 (EFVVPLMAGAYAGAGLLIVLM), 237–257 (AFFSLVFSNAFTSSSAVGGFA), 303–323 (VIGIVIDTLIICTTTAFIVLA), 353–373 (GYFVSVSLVFFVVSTIMVVIF), 386–406 (LAGHVIKFVYLAAIIIGAAGG), and 410–430 (IWGVLDLALVFIVVPNVIALL).

It belongs to the alanine or glycine:cation symporter (AGCS) (TC 2.A.25) family.

Its subcellular location is the cell membrane. This is an uncharacterized protein from Bacillus subtilis (strain 168).